Reading from the N-terminus, the 200-residue chain is ATP synthase subunit s, mitochondrial (200 aa).

The N-terminal 25 residues, 1 to 25 (MMMFGKISRQLFSLKKIPWSCDSRY), are a transit peptide targeting the mitochondrion. The N-terminal domain stretch occupies residues 1-61 (MMMFGKISRQ…SEWLLRCGAK (61 aa)). Mg(2+) is bound at residue G59. 4 LRR repeats span residues 62-87 (VRYC…RYKI), 88-116 (QAID…RITL), 117-141 (CRCH…KSLL), and 142-173 (ELEI…LSDL). Residue T93 participates in Mg(2+) binding.

Belongs to the ATP synthase subunit s family. Homotetramer. Associates with ATP synthase.

Its subcellular location is the mitochondrion. The protein resides in the mitochondrion inner membrane. Involved in regulation of mitochondrial membrane ATP synthase. Necessary for H(+) conduction of ATP synthase. Facilitates energy-driven catalysis of ATP synthesis by blocking a proton leak through an alternative proton exit pathway. This chain is ATP synthase subunit s, mitochondrial, found in Rattus norvegicus (Rat).